A 257-amino-acid polypeptide reads, in one-letter code: Inositol diphosphatase DSP2 (257 aa).

Residues 66–251 (NFSMVDNGIF…VSGLKHTPMS (186 aa)) form the Tyrosine-protein phosphatase domain. Residues Ile168 and Lys172 each contribute to the 1D-myo-inositol hexakisphosphate site. Cys192 functions as the Phosphocysteine intermediate in the catalytic mechanism.

Belongs to the protein-tyrosine phosphatase family. Atypical dual-specificity phosphatase Siw14-like subfamily. As to expression, expressed in roots, leaves, stems, flowers and siliques.

The catalysed reaction is 5-diphospho-1D-myo-inositol 1,2,3,4,6-pentakisphosphate + H2O = 1D-myo-inositol hexakisphosphate + phosphate + H(+). It catalyses the reaction 1,5-bis(diphospho)-1D-myo-inositol 2,3,4,6-tetrakisphosphate + H2O = 1-diphospho-1D-myo-inositol 2,3,4,5,6-pentakisphosphate + phosphate + 2 H(+). The enzyme catalyses 3,5-bis(diphospho)-1D-myo-inositol 1,2,4,6-tetrakisphosphate + H2O = 3-diphospho-1D-myo-inositol 1,2,4,5,6-pentakisphosphate + phosphate + 2 H(+). It carries out the reaction 6-diphospho-1D-myo-inositol pentakisphosphate + H2O = 1D-myo-inositol hexakisphosphate + phosphate + H(+). Cleaves the beta-phosphate at the 5-position of soluble inositol pyrophosphates. Has highest activity on 5-diphosphoinositol 1,2,3,4,6-pentakisphosphate (5-InsP(7)), 1,5-bis-diphosphoinositol 2,3,4,6-tetrakisphosphate (1,5-InsP(8)) and 3,5-InsP(8). Possesses phosphotyrosine phosphatase activity in vitro. Dephosphorylates the phosphoinositides PI(3,5)P2. Hydrolyzes para-nitrophenyl phosphate and O-methylfluorescein phosphate in vitro. In Arabidopsis thaliana (Mouse-ear cress), this protein is Inositol diphosphatase DSP2.